The primary structure comprises 210 residues: Large ribosomal subunit protein uL3 (210 aa).

A disordered region spans residues 126–167 (WGFQRGPSGHGSKNIREPGSTGNATFPGRVIKGKKMPGQKGN). Over residues 156 to 167 (IKGKKMPGQKGN) the composition is skewed to basic residues.

The protein belongs to the universal ribosomal protein uL3 family. In terms of assembly, part of the 50S ribosomal subunit. Forms a cluster with proteins L14 and L19.

Its function is as follows. One of the primary rRNA binding proteins, it binds directly near the 3'-end of the 23S rRNA, where it nucleates assembly of the 50S subunit. The sequence is that of Large ribosomal subunit protein uL3 from Syntrophobacter fumaroxidans (strain DSM 10017 / MPOB).